The primary structure comprises 340 residues: Photosystem II assembly lipoprotein Ycf48 (340 aa).

The N-terminal stretch at 1 to 26 is a signal peptide; that stretch reads MTSVLGLLKPLKKAIAAIAVLVLCIG. Cys27 carries N-palmitoyl cysteine lipidation. Residue Cys27 is the site of S-diacylglycerol cysteine attachment.

Belongs to the Ycf48 family. In terms of assembly, part of early PSII assembly complexes which includes D1 (psbA) and PsbI; not found in mature PSII. Binds to the lumenal side of PSII complexes. Interacts with YidC.

It localises to the cellular thylakoid membrane. Its function is as follows. A factor required for optimal assembly of photosystem II (PSII), acting in the early stages of PSII assembly. Also plays a role in replacement of photodamaged D1 (psbA). Assists YidC in synthesis of chlorophyll-binding proteins. The polypeptide is Photosystem II assembly lipoprotein Ycf48 (Picosynechococcus sp. (strain ATCC 27264 / PCC 7002 / PR-6) (Agmenellum quadruplicatum)).